A 481-amino-acid chain; its full sequence is MRRLLMNRNLSPLCRSVLRFIDLSVCRAMACFLDCFRARDNRSTSNLVSHSSLANSRKAQDSQNDLSALFLSEEKSASSPCLDKERFDLDSIHIDKGLRDEARFLKACGTIPETPIEIRKASQKLSPQHSGSSHFHSWISSSSSMGSRLAESSTPMKACEEVGRPSFTSEQTASSCVIDVRDNARISSASSDGTEVESVGTAIKGELDRTARPTFTAGKNKSVRFECDLDQSNSSNSSENGSSRKPEMGGKICFTVSSPNPTPLKLSDEMQTPGTIYPANMESGGRGRPRIRSQFVHSVSNIMENASLYKVYKDSHEGLDYEEQIEAETPSSETYGEKVEESSDEKLSKFEASFSPWLNQINENIAALNERTPGVGVITPGDRPIIGLVAAQWIENEQTEISPKMWDGNGIPNSTTKYKEDQKVSWHATPFEVRLEKALSEEGGQSLFPQRKLEVMMEEVEGDTDISQLHHSVQPNSVVSF.

The segment at 226–250 is disordered; the sequence is ECDLDQSNSSNSSENGSSRKPEMGG. Positions 232–241 are enriched in low complexity; sequence SNSSNSSENG.

Required for normal spindle orientation at male meiosis II and normal formation of tetrad of microspores. Acts as a positive regulator of PS1 in male sporogenesis. Not involved in female meiosis. The sequence is that of Protein JASON from Arabidopsis thaliana (Mouse-ear cress).